Reading from the N-terminus, the 456-residue chain is MEKLWGGRFQGKSEAWIDDFGASISFDQKMAKEDLAGSLAHVAMLSKCGIIPASEAAEITAGLKILQEKLALGELEFSTVNEDIHLNIEKLLHEEIGPVAGKLHTARSRNDQVATDMHLYLKQAVAEIIQSLKHLRVVLVQKAELHVETIMPGYTHLQHAQPLSFAHHLLAYFGMFTRDLERLEESVKRIDISPLGSAALAGTTFPIDRAYSAELLGFSAVYENSLDGVSDRDFIIEFLSNSSILMMHLSRFCEELILWTSHEFQFVELTDAFSTGSSIMPQKKNPDMAELIRGKTGRVYGNLFGMLTVLKGLPLAYNKDLQEDKEGMFDTLETVQTSLDIFAGMIETMKVNTEIMEESTQKDFSNATELADYLAKKGVPFREAHEIVGKLVLECTQNGIYLQDVALSHYQEINPLIEDDIYVVLSSKTAVQKRNSYGGTGFDQIKVALENTKKTL.

It belongs to the lyase 1 family. Argininosuccinate lyase subfamily.

Its subcellular location is the cytoplasm. The enzyme catalyses 2-(N(omega)-L-arginino)succinate = fumarate + L-arginine. The protein operates within amino-acid biosynthesis; L-arginine biosynthesis; L-arginine from L-ornithine and carbamoyl phosphate: step 3/3. This is Argininosuccinate lyase from Listeria monocytogenes serotype 4a (strain HCC23).